Reading from the N-terminus, the 276-residue chain is NAD kinase (276 aa).

Residue Asp-66 is the Proton acceptor of the active site. NAD(+)-binding positions include Asp-66–Gly-67, Asn-139–Asp-140, Asp-168, Thr-179–Ser-184, and Gln-234.

This sequence belongs to the NAD kinase family. Requires a divalent metal cation as cofactor.

It localises to the cytoplasm. The enzyme catalyses NAD(+) + ATP = ADP + NADP(+) + H(+). Its function is as follows. Involved in the regulation of the intracellular balance of NAD and NADP, and is a key enzyme in the biosynthesis of NADP. Catalyzes specifically the phosphorylation on 2'-hydroxyl of the adenosine moiety of NAD to yield NADP. The chain is NAD kinase from Campylobacter lari (strain RM2100 / D67 / ATCC BAA-1060).